A 324-amino-acid polypeptide reads, in one-letter code: MHLPSLVLGLLGLGLTASASPIEERSNRSKAPDGCLTVGSSGKYSTIGAALDALGDSKSDACIFIGAGTYKEQITIDYKGKLTMYGETTDTSSYKKNQVTITHTISSPQAGTLDKSATVNVRSDGFKMYNINVINGYGKGSQAVALVANADKLGFYGCSFVGYQDTLYAKAGRQYYSNCYIEGATDYIFGNASAWFGECDIMSVGPGYITAMSRTTADQTTWYAIDNCNIYGKPGVDLTAKVYLGRPWRVLARVIYQNSQLSNIINPKGWTTMAEGATPLYYEYNNKGAGADTSKREYESSISGAVSMNTVLGSGWNSWIDTTY.

The first 19 residues, 1-19 (MHLPSLVLGLLGLGLTASA), serve as a signal peptide directing secretion. Asn-27 carries N-linked (GlcNAc...) asparagine glycosylation. Residue Gln-142 coordinates substrate. The active-site Proton donor is Asp-165. Catalysis depends on Asp-186, which acts as the Nucleophile. An N-linked (GlcNAc...) asparagine glycan is attached at Asn-191. 2 residues coordinate substrate: Arg-246 and Trp-248.

The protein belongs to the pectinesterase family.

The protein resides in the secreted. The catalysed reaction is [(1-&gt;4)-alpha-D-galacturonosyl methyl ester](n) + n H2O = [(1-&gt;4)-alpha-D-galacturonosyl](n) + n methanol + n H(+). It participates in glycan metabolism; pectin degradation; 2-dehydro-3-deoxy-D-gluconate from pectin: step 1/5. Involved in maceration and soft-rotting of plant tissue. This chain is Probable pectinesterase A (pmeA), found in Neosartorya fischeri (strain ATCC 1020 / DSM 3700 / CBS 544.65 / FGSC A1164 / JCM 1740 / NRRL 181 / WB 181) (Aspergillus fischerianus).